We begin with the raw amino-acid sequence, 96 residues long: UPF0235 protein VP2619 (96 aa).

Belongs to the UPF0235 family.

The chain is UPF0235 protein VP2619 from Vibrio parahaemolyticus serotype O3:K6 (strain RIMD 2210633).